A 142-amino-acid polypeptide reads, in one-letter code: Transcriptional regulator MraZ (142 aa).

SpoVT-AbrB domains follow at residues 5–51 and 77–120; these read ASSL…PRPV and ASDV…DATK.

Belongs to the MraZ family. Forms oligomers.

It localises to the cytoplasm. Its subcellular location is the nucleoid. The sequence is that of Transcriptional regulator MraZ from Janthinobacterium sp. (strain Marseille) (Minibacterium massiliensis).